A 367-amino-acid polypeptide reads, in one-letter code: MGLSAPKNKIKLSHDPNNTKWSGNTDSFGHRMMKSQGWTPGEYLGAKDAAHAEFHTAANASHIRVVIKDNNLGLGAKIGSGVGHGECTGLDVFQNLLGRLNGKEEAEIEKEQKGREDLKRAIYAERKWGSIRFVRGGVLVGDKIQDLIDGEKERVKALKKGKTAESSSDDSDSSSDEEEEEKSPEPVTEKKKSSKRKREEQEEEEKTSSKKSKKDKKSKKRKSEDEDDKDKSESKKSKKSKKDRKSKSKSTSESETETLDEAAIKARKKEKKEKKRREKEAATAGADTEETSSTSKSSKKNSKKDKHKSSSASESSTKESTPTVTESSGRSTPMGIRSIRARHIAQKRMASMDVASLNQIFMIKSQT.

Disordered regions lie at residues Met-1 to Phe-28 and Lys-156 to Ile-336. Polar residues predominate over residues Asp-15–Ser-27. In terms of domain architecture, G-patch spans Thr-25–Gly-79. A compositionally biased stretch (acidic residues) spans Ser-167 to Lys-182. Composition is skewed to basic residues over residues Ser-209–Arg-221, Lys-236–Ser-248, and Lys-265–Arg-277. Low complexity predominate over residues Ala-282–Lys-296. Basic residues predominate over residues Ser-297–Ser-309. Residues Ser-310–Ser-328 show a composition bias toward low complexity.

Belongs to the PINX1 family.

Its subcellular location is the nucleus. It localises to the nucleolus. Functionally, involved in rRNA-processing at A0, A1 and A2 sites and negatively regulates telomerase. This is Protein pxr1 (pxr1) from Sclerotinia sclerotiorum (strain ATCC 18683 / 1980 / Ss-1) (White mold).